The sequence spans 929 residues: MSDLESAYRLEYFEEEGFHRRECVSCGAHFWTRDGDRETCGEPPCEDYQFIDNPGFDASYSLTEMRSAMVSYFERAGHDSIDPYPVAANRWRDDVLLTQASIYDFQPHVTSGASPPPANPLVVSQPCIRMQDIDNVGKTGRHTMAFEMLGHHAFNADEGTDYAYDGEVYWKDTAVEHCEGLLADVGVSLDEVTFIEDPWVGGGNAGAAFEVIYRGLELATLVFMSLERDPDGEYEMKDGHTYAEMDRRVVDTGYGVERWTWMSQGTPTVYEAVYPDTIDFLKEQAGIEHTDEEAELVHRASKHAGNLDIDEVADIEDARAGIAAELGVDAERLTELVAPLEDIYAIADHSRVLAYMFGDGIVPSNVGTGYLARMVLRRTKRLVDDIGADVPLDELVDMQADRLGYENRDTIRSIVRSEVEKYGETLERGGRRVEQLAEEYADRGEPVPTDELIELYDSHGIQPGMVADIAADVGATVDAPDDFYSLVAARHDDGDSGAAGGDGGGDDRLADLPETETLYYDDAYGSEFEAVVLDVFEREGEDGDGAFDVVLDQTMFYPEGGGQPADTGVLTGDDHTVDVIDVQERDGVVLHRTTDNPGKGEFVRGQIDTERRRRLMAHHTATHIVVYAARQVLGEHVRQAGAQKGVDSSRIDVTHYERVDRETVKEIERVANEIVRANTSVQCEWPDRHEAEAEYGFDLYQGGIPAGEQIRLVHVDDDVQACGGTHVARTGEIGSIKILNAERVQDGVERLTFAAGAAAVEHVQGQEDDLRAAAEVLDVTPAEVPETAERFFTEWKDRGKTIDDLKEQLAEARASGGGAGEEVDVAGTTAVVQRVDGDMDELQATANALVDGGQVAVVGSGADGAQFVVGVPDGVPVNAGEVVGELAAMVGGGGGGPPDFAQGGGPDAERLDDALSRAADVLGDAASAE.

Zn(2+) contacts are provided by His-619, His-623, Cys-722, and His-726.

It belongs to the class-II aminoacyl-tRNA synthetase family. Zn(2+) is required as a cofactor.

It is found in the cytoplasm. The catalysed reaction is tRNA(Ala) + L-alanine + ATP = L-alanyl-tRNA(Ala) + AMP + diphosphate. In terms of biological role, catalyzes the attachment of alanine to tRNA(Ala) in a two-step reaction: alanine is first activated by ATP to form Ala-AMP and then transferred to the acceptor end of tRNA(Ala). Also edits incorrectly charged Ser-tRNA(Ala) and Gly-tRNA(Ala) via its editing domain. In Halobacterium salinarum (strain ATCC 29341 / DSM 671 / R1), this protein is Alanine--tRNA ligase.